We begin with the raw amino-acid sequence, 127 residues long: Large ribosomal subunit protein mL55 (127 aa).

The transit peptide at 1–32 (MPLAILLSLLRHCGVRAALPTPRHLHTSPWRA) directs the protein to the mitochondrion. At Ser84 the chain carries Phosphoserine.

It belongs to the mitochondrion-specific ribosomal protein mL55 family. As to quaternary structure, component of the mitochondrial ribosome large subunit (39S) which comprises a 16S rRNA and about 50 distinct proteins.

Its subcellular location is the mitochondrion. The protein is Large ribosomal subunit protein mL55 (Mrpl55) of Mus musculus (Mouse).